Here is a 311-residue protein sequence, read N- to C-terminus: p-hydroxybenzoic acid efflux pump subunit AaeA (311 aa).

The helical transmembrane segment at 11–31 threads the bilayer; the sequence is VGITVLVVVLAVIAIFNVWAF.

Belongs to the membrane fusion protein (MFP) (TC 8.A.1) family.

The protein localises to the cell inner membrane. Its function is as follows. Forms an efflux pump with AaeB. This Yersinia pseudotuberculosis serotype O:3 (strain YPIII) protein is p-hydroxybenzoic acid efflux pump subunit AaeA.